Here is a 110-residue protein sequence, read N- to C-terminus: Histone H2A.1 (110 aa).

The protein belongs to the histone H2A family. As to quaternary structure, the nucleosome is a histone octamer containing two molecules each of H2A, H2B, H3 and H4 assembled in one H3-H4 heterotetramer and two H2A-H2B heterodimers. The octamer wraps approximately 147 bp of DNA. As to expression, expressed in the generative cell within the bicellular pollen. Not detected in other reproductive or vegetative tissues.

It localises to the nucleus. Its subcellular location is the chromosome. Its function is as follows. Core component of nucleosome. Nucleosomes wrap and compact DNA into chromatin, limiting DNA accessibility to the cellular machineries which require DNA as a template. Histones thereby play a central role in transcription regulation, DNA repair, DNA replication and chromosomal stability. DNA accessibility is regulated via a complex set of post-translational modifications of histones, also called histone code, and nucleosome remodeling. In Lilium longiflorum (Trumpet lily), this protein is Histone H2A.1 (gcH2A).